The primary structure comprises 409 residues: 5-aminolevulinate synthase (409 aa).

Succinyl-CoA-binding residues include R21, S137, and K156. Residues S189, H217, and T245 each contribute to the pyridoxal 5'-phosphate site. The active site involves K248. The residue at position 248 (K248) is an N6-(pyridoxal phosphate)lysine. 2 residues coordinate pyridoxal 5'-phosphate: S277 and T278. T365 is a binding site for succinyl-CoA.

It belongs to the class-II pyridoxal-phosphate-dependent aminotransferase family. In terms of assembly, homodimer. It depends on pyridoxal 5'-phosphate as a cofactor.

It catalyses the reaction succinyl-CoA + glycine + H(+) = 5-aminolevulinate + CO2 + CoA. It participates in porphyrin-containing compound metabolism; protoporphyrin-IX biosynthesis; 5-aminolevulinate from glycine: step 1/1. This Rhodobacter capsulatus (strain ATCC BAA-309 / NBRC 16581 / SB1003) protein is 5-aminolevulinate synthase (hemA).